The chain runs to 372 residues: Envelope phospholipase OPG057 (372 aa).

Residues Tyr153–Leu156 carry the YPPL motif. S-palmitoyl cysteine; by host attachment occurs at residues Cys185 and Cys186. A PLD phosphodiesterase domain is found at Phe307 to His334.

This sequence belongs to the orthopoxvirus OPG057 family. In terms of assembly, interacts with protein OPG190. Post-translationally, palmitoylated. Attachment of the palmitate moiety is essential for correct intracellular targeting and protein function.

It is found in the virion membrane. The protein resides in the host Golgi apparatus. It localises to the host trans-Golgi network. The protein localises to the host endoplasmic reticulum membrane. The catalysed reaction is a 1,2-diacyl-sn-glycero-3-phosphocholine + H2O = a 1,2-diacyl-sn-glycero-3-phosphate + choline + H(+). In terms of biological role, major envelope protein that plays a role in the biogenesis of the viral double membrane and in egress of virus from the host cell. Produces the wrapped form of virus that is required for cell-to-cell spread. Acts as a lipase with broad specificity including phospholipase C, phospholipase A, and triacylglycerol lipase activities. In Variola virus (isolate Human/India/Ind3/1967) (VARV), this protein is Envelope phospholipase OPG057 (OPG057).